The sequence spans 172 residues: Adenine phosphoribosyltransferase (172 aa).

This sequence belongs to the purine/pyrimidine phosphoribosyltransferase family. In terms of assembly, homodimer.

Its subcellular location is the cytoplasm. The catalysed reaction is AMP + diphosphate = 5-phospho-alpha-D-ribose 1-diphosphate + adenine. It participates in purine metabolism; AMP biosynthesis via salvage pathway; AMP from adenine: step 1/1. Functionally, catalyzes a salvage reaction resulting in the formation of AMP, that is energically less costly than de novo synthesis. The polypeptide is Adenine phosphoribosyltransferase (Staphylococcus carnosus (strain TM300)).